The primary structure comprises 138 residues: Probable DNA-directed RNA polymerases I, II, and III subunit RPABC2 (138 aa).

Composition is skewed to acidic residues over residues 1–27 (MADD…VIEE) and 35–46 (EEEDDDNNVDEN). A disordered region spans residues 1–46 (MADDDDYQDMDNDDFVDDNEMEDVIEEEQQRPDHEEEDDDNNVDEN).

It belongs to the archaeal Rpo6/eukaryotic RPB6 RNA polymerase subunit family. In terms of assembly, component of the RNA polymerase I (Pol I), RNA polymerase II (Pol II) and RNA polymerase III (Pol III) complexes consisting of at least 13, 12 and 17 subunits, respectively.

It localises to the nucleus. Functionally, DNA-dependent RNA polymerases catalyze the transcription of DNA into RNA using the four ribonucleoside triphosphates as substrates. Common component of RNA polymerases I, II and III which synthesize ribosomal RNA precursors, mRNA precursors and many functional non-coding RNAs, and small RNAs, such as 5S rRNA and tRNAs, respectively. Pol II is the central component of the basal RNA polymerase II transcription machinery. Pols are composed of mobile elements that move relative to each other. In Pol II, RPB6 is part of the clamp element and together with parts of RPB1 and RPB2 forms a pocket to which the RPB4-RPB7 subcomplex binds. The chain is Probable DNA-directed RNA polymerases I, II, and III subunit RPABC2 from Caenorhabditis briggsae.